Here is a 242-residue protein sequence, read N- to C-terminus: Ubiquinone biosynthesis O-methyltransferase (242 aa).

S-adenosyl-L-methionine contacts are provided by Arg-36, Gly-56, Asp-77, and Met-130.

This sequence belongs to the methyltransferase superfamily. UbiG/COQ3 family.

It carries out the reaction a 3-demethylubiquinol + S-adenosyl-L-methionine = a ubiquinol + S-adenosyl-L-homocysteine + H(+). It catalyses the reaction a 3-(all-trans-polyprenyl)benzene-1,2-diol + S-adenosyl-L-methionine = a 2-methoxy-6-(all-trans-polyprenyl)phenol + S-adenosyl-L-homocysteine + H(+). It participates in cofactor biosynthesis; ubiquinone biosynthesis. O-methyltransferase that catalyzes the 2 O-methylation steps in the ubiquinone biosynthetic pathway. The protein is Ubiquinone biosynthesis O-methyltransferase of Pasteurella multocida (strain Pm70).